A 1198-amino-acid polypeptide reads, in one-letter code: DNA polymerase (1198 aa).

Disordered regions lie at residues 1–90 (MALV…TVVA), 179–198 (LEQPDGQGQAAEVEDHQPNP), and 906–931 (ALADSDAEESEDERAPTPFYSPPSGT). Residues 30 to 40 (QQPPRAAPAPA) are compositionally biased toward low complexity.

The protein belongs to the DNA polymerase type-B family. As to quaternary structure, heterodimer with the terminal protein; this heterodimer binds to bp 9 to 18 of the genome. Forms a complex with viral pTP, DBP and hosts NFIA and POU2F1/OCT1 for initiation of replication.

Its subcellular location is the host nucleus. It catalyses the reaction DNA(n) + a 2'-deoxyribonucleoside 5'-triphosphate = DNA(n+1) + diphosphate. Functionally, eukaryotic-type DNA polymerase involved in viral genomic replication. DNA synthesis is protein primed, and acts in a strand displacement replication. Assembles in complex with viral pTP, DBP, host NFIA and host POU2F1/OCT1 on viral origin of replication. The polymerase covalently transfers dCMP onto pTP, thereby initiating complementary strand synthesis. The chain is DNA polymerase from Homo sapiens (Human).